The primary structure comprises 391 residues: Homoserine O-acetyltransferase (391 aa).

One can recognise an AB hydrolase-1 domain in the interval 50–360 (NAILICHALT…DKGHDAFLLD (311 aa)). Catalysis depends on Ser-155, which acts as the Nucleophile. Arg-225 lines the substrate pocket. Active-site residues include Asp-321 and His-354. Substrate is bound at residue Asp-355.

This sequence belongs to the AB hydrolase superfamily. MetX family. In terms of assembly, homodimer.

Its subcellular location is the cytoplasm. The catalysed reaction is L-homoserine + acetyl-CoA = O-acetyl-L-homoserine + CoA. Its pathway is amino-acid biosynthesis; L-methionine biosynthesis via de novo pathway; O-acetyl-L-homoserine from L-homoserine: step 1/1. Its function is as follows. Transfers an acetyl group from acetyl-CoA to L-homoserine, forming acetyl-L-homoserine. This chain is Homoserine O-acetyltransferase, found in Rhodospirillum rubrum (strain ATCC 11170 / ATH 1.1.1 / DSM 467 / LMG 4362 / NCIMB 8255 / S1).